The primary structure comprises 509 residues: 2-isopropylmalate synthase (509 aa).

Positions 5–267 (IQIFDTTLRD…QTALNLEETK (263 aa)) constitute a Pyruvate carboxyltransferase domain. 4 residues coordinate Mn(2+): D14, H202, H204, and N238. Residues 391–509 (KLETLQLQYV…AAENVEKVGN (119 aa)) form a regulatory domain region.

It belongs to the alpha-IPM synthase/homocitrate synthase family. LeuA type 1 subfamily. In terms of assembly, homodimer. The cofactor is Mn(2+).

Its subcellular location is the cytoplasm. The catalysed reaction is 3-methyl-2-oxobutanoate + acetyl-CoA + H2O = (2S)-2-isopropylmalate + CoA + H(+). The protein operates within amino-acid biosynthesis; L-leucine biosynthesis; L-leucine from 3-methyl-2-oxobutanoate: step 1/4. In terms of biological role, catalyzes the condensation of the acetyl group of acetyl-CoA with 3-methyl-2-oxobutanoate (2-ketoisovalerate) to form 3-carboxy-3-hydroxy-4-methylpentanoate (2-isopropylmalate). In Staphylococcus aureus (strain MW2), this protein is 2-isopropylmalate synthase.